Consider the following 44-residue polypeptide: Photosystem I reaction center subunit IX (44 aa).

The helical transmembrane segment at 7-27 threads the bilayer; that stretch reads YLSVAPVLTTLWFGSLAGLLI.

It belongs to the PsaJ family.

It is found in the plastid. Its subcellular location is the chloroplast thylakoid membrane. Functionally, may help in the organization of the PsaE and PsaF subunits. The chain is Photosystem I reaction center subunit IX from Drimys granadensis.